The primary structure comprises 424 residues: Adenylosuccinate synthetase (424 aa).

GTP contacts are provided by residues 12–18 (GDEGKGK) and 40–42 (GHT). Asp13 serves as the catalytic Proton acceptor. Asp13 and Gly40 together coordinate Mg(2+). IMP is bound by residues 13–16 (DEGK), 38–41 (NAGH), Thr130, Arg144, Asn220, Thr235, and Arg299. The active-site Proton donor is the His41. Residue 295 to 301 (VTTGRRR) participates in substrate binding. GTP-binding positions include Arg301, 327–329 (KLD), and 412–414 (GTG).

Belongs to the adenylosuccinate synthetase family. As to quaternary structure, homodimer. The cofactor is Mg(2+).

Its subcellular location is the cytoplasm. The catalysed reaction is IMP + L-aspartate + GTP = N(6)-(1,2-dicarboxyethyl)-AMP + GDP + phosphate + 2 H(+). Its pathway is purine metabolism; AMP biosynthesis via de novo pathway; AMP from IMP: step 1/2. Plays an important role in the de novo pathway and in the salvage pathway of purine nucleotide biosynthesis. Catalyzes the first committed step in the biosynthesis of AMP from IMP. The protein is Adenylosuccinate synthetase of Aspergillus niger (strain ATCC MYA-4892 / CBS 513.88 / FGSC A1513).